The primary structure comprises 59 residues: Putative HTH-type transcriptional regulator YneL (59 aa).

In terms of domain architecture, HTH araC/xylS-type spans 1–59 (MSPLRYQKWLRLNEVRRQMLNEHYDVTTAAYAVGYESYPISVGNIRGCLESHPREILPG). Residues 26 to 49 (VTTAAYAVGYESYPISVGNIRGCL) constitute a DNA-binding region (H-T-H motif).

The polypeptide is Putative HTH-type transcriptional regulator YneL (yneL) (Escherichia coli (strain K12)).